We begin with the raw amino-acid sequence, 76 residues long: Exodeoxyribonuclease 7 small subunit (76 aa).

This sequence belongs to the XseB family. In terms of assembly, heterooligomer composed of large and small subunits.

The protein localises to the cytoplasm. The catalysed reaction is Exonucleolytic cleavage in either 5'- to 3'- or 3'- to 5'-direction to yield nucleoside 5'-phosphates.. Bidirectionally degrades single-stranded DNA into large acid-insoluble oligonucleotides, which are then degraded further into small acid-soluble oligonucleotides. The sequence is that of Exodeoxyribonuclease 7 small subunit from Geotalea daltonii (strain DSM 22248 / JCM 15807 / FRC-32) (Geobacter daltonii).